The sequence spans 880 residues: Leucine--tRNA ligase (880 aa).

Positions 49-59 (PYPSGRIHMGH) match the 'HIGH' region motif. Positions 638–642 (KMSKS) match the 'KMSKS' region motif. Lys641 provides a ligand contact to ATP.

This sequence belongs to the class-I aminoacyl-tRNA synthetase family.

The protein localises to the cytoplasm. It carries out the reaction tRNA(Leu) + L-leucine + ATP = L-leucyl-tRNA(Leu) + AMP + diphosphate. This Bartonella henselae (strain ATCC 49882 / DSM 28221 / CCUG 30454 / Houston 1) (Rochalimaea henselae) protein is Leucine--tRNA ligase.